We begin with the raw amino-acid sequence, 281 residues long: Hexaprenyl pyrophosphate synthase (281 aa).

3 residues coordinate isopentenyl diphosphate: lysine 42, arginine 45, and histidine 74. Aspartate 81 and aspartate 85 together coordinate Mg(2+). Arginine 91 serves as a coordination point for isopentenyl diphosphate.

The protein belongs to the FPP/GGPP synthase family. Homodimer. It depends on Mg(2+) as a cofactor.

The enzyme catalyses 2 isopentenyl diphosphate + (2E,6E,10E)-geranylgeranyl diphosphate = all-trans-hexaprenyl diphosphate + 2 diphosphate. Functionally, catalyzes consecutive E-type condensation of two isopentenyl pyrophosphate (IPP) molecules with an allylic substrate such as geranylgeranyl diphosphate (GGPP), farnesyl diphosphate (FPP) or geranyl diphosphate (GPP) to yield the medium-chain product trans-C30-hexaprenyl pyrophosphate (HexPP). GGPP is the physiological substrate. The sequence is that of Hexaprenyl pyrophosphate synthase (gdS-2) from Saccharolobus solfataricus (strain ATCC 35092 / DSM 1617 / JCM 11322 / P2) (Sulfolobus solfataricus).